The sequence spans 227 residues: Orotidine 5'-phosphate decarboxylase (227 aa).

Residues D8, K30, 58–67 (DLKLYDIPNT), T117, R177, Q186, G206, and R207 each bind substrate. Residue K60 is the Proton donor of the active site.

Belongs to the OMP decarboxylase family. Type 1 subfamily. In terms of assembly, homodimer.

The enzyme catalyses orotidine 5'-phosphate + H(+) = UMP + CO2. It functions in the pathway pyrimidine metabolism; UMP biosynthesis via de novo pathway; UMP from orotate: step 2/2. Functionally, catalyzes the decarboxylation of orotidine 5'-monophosphate (OMP) to uridine 5'-monophosphate (UMP). The polypeptide is Orotidine 5'-phosphate decarboxylase (Campylobacter lari (strain RM2100 / D67 / ATCC BAA-1060)).